We begin with the raw amino-acid sequence, 288 residues long: Acetyl-coenzyme A carboxylase carboxyl transferase subunit beta (288 aa).

Residues 30–288 (IMTKCPKCKK…KMHQEVKTNA (259 aa)) form the CoA carboxyltransferase N-terminal domain. Zn(2+)-binding residues include C34, C37, C53, and C56. A C4-type zinc finger spans residues 34 to 56 (CPKCKKIMYTKELAENLNVCFNC).

This sequence belongs to the AccD/PCCB family. As to quaternary structure, acetyl-CoA carboxylase is a heterohexamer composed of biotin carboxyl carrier protein (AccB), biotin carboxylase (AccC) and two subunits each of ACCase subunit alpha (AccA) and ACCase subunit beta (AccD). Zn(2+) serves as cofactor.

It is found in the cytoplasm. It catalyses the reaction N(6)-carboxybiotinyl-L-lysyl-[protein] + acetyl-CoA = N(6)-biotinyl-L-lysyl-[protein] + malonyl-CoA. Its pathway is lipid metabolism; malonyl-CoA biosynthesis; malonyl-CoA from acetyl-CoA: step 1/1. Component of the acetyl coenzyme A carboxylase (ACC) complex. Biotin carboxylase (BC) catalyzes the carboxylation of biotin on its carrier protein (BCCP) and then the CO(2) group is transferred by the transcarboxylase to acetyl-CoA to form malonyl-CoA. In Staphylococcus saprophyticus subsp. saprophyticus (strain ATCC 15305 / DSM 20229 / NCIMB 8711 / NCTC 7292 / S-41), this protein is Acetyl-coenzyme A carboxylase carboxyl transferase subunit beta.